We begin with the raw amino-acid sequence, 215 residues long: LexA repressor (215 aa).

Positions Arg-28–Arg-48 form a DNA-binding region, H-T-H motif. Catalysis depends on for autocatalytic cleavage activity residues Ser-133 and Lys-170.

This sequence belongs to the peptidase S24 family. Homodimer.

It catalyses the reaction Hydrolysis of Ala-|-Gly bond in repressor LexA.. Its function is as follows. Represses a number of genes involved in the response to DNA damage (SOS response), including recA and lexA. In the presence of single-stranded DNA, RecA interacts with LexA causing an autocatalytic cleavage which disrupts the DNA-binding part of LexA, leading to derepression of the SOS regulon and eventually DNA repair. The polypeptide is LexA repressor (Burkholderia vietnamiensis (strain G4 / LMG 22486) (Burkholderia cepacia (strain R1808))).